The primary structure comprises 431 residues: Adenylosuccinate synthetase (431 aa).

Residues G15–K21 and G43–T45 each bind GTP. D16 acts as the Proton acceptor in catalysis. Mg(2+) is bound by residues D16 and G43. IMP-binding positions include D16–K19, N41–H44, T135, R149, N227, T242, and R306. H44 serves as the catalytic Proton donor. V302–R308 contributes to the substrate binding site. GTP is bound by residues R308, K334–D336, and G416–G418.

It belongs to the adenylosuccinate synthetase family. As to quaternary structure, homodimer. It depends on Mg(2+) as a cofactor.

It localises to the cytoplasm. The enzyme catalyses IMP + L-aspartate + GTP = N(6)-(1,2-dicarboxyethyl)-AMP + GDP + phosphate + 2 H(+). It participates in purine metabolism; AMP biosynthesis via de novo pathway; AMP from IMP: step 1/2. Its function is as follows. Plays an important role in the de novo pathway and in the salvage pathway of purine nucleotide biosynthesis. Catalyzes the first committed step in the biosynthesis of AMP from IMP. The chain is Adenylosuccinate synthetase from Monosiga brevicollis (Choanoflagellate).